The following is a 184-amino-acid chain: Cell number regulator 5 (184 aa).

The chain crosses the membrane as a helical span at residues 91–111; that stretch reads MLWGLLTSLCCVFTGGLVLAV. Residues 162 to 184 are disordered; sequence RTGSGSSPAPNVTPPPVQTMDEL.

The protein belongs to the cornifelin family. In terms of tissue distribution, expressed in roots, leaves, stalks, immature ears, endosperm and pollen.

The protein localises to the membrane. This chain is Cell number regulator 5 (CNR5), found in Zea mays (Maize).